A 133-amino-acid polypeptide reads, in one-letter code: UPF0102 protein bll0669 (133 aa).

Belongs to the UPF0102 family.

This Bradyrhizobium diazoefficiens (strain JCM 10833 / BCRC 13528 / IAM 13628 / NBRC 14792 / USDA 110) protein is UPF0102 protein bll0669.